We begin with the raw amino-acid sequence, 327 residues long: DNA-directed RNA polymerase subunit alpha (327 aa).

Positions 1 to 233 are alpha N-terminal domain (alpha-NTD); sequence MQNSASEFLK…DQLSIFADLQ (233 aa). Residues 247-327 are alpha C-terminal domain (alpha-CTD); the sequence is IDPILLRPVD…NWPPAGLEKP (81 aa).

The protein belongs to the RNA polymerase alpha chain family. As to quaternary structure, homodimer. The RNAP catalytic core consists of 2 alpha, 1 beta, 1 beta' and 1 omega subunit. When a sigma factor is associated with the core the holoenzyme is formed, which can initiate transcription.

The enzyme catalyses RNA(n) + a ribonucleoside 5'-triphosphate = RNA(n+1) + diphosphate. Functionally, DNA-dependent RNA polymerase catalyzes the transcription of DNA into RNA using the four ribonucleoside triphosphates as substrates. In Chromobacterium violaceum (strain ATCC 12472 / DSM 30191 / JCM 1249 / CCUG 213 / NBRC 12614 / NCIMB 9131 / NCTC 9757 / MK), this protein is DNA-directed RNA polymerase subunit alpha.